A 54-amino-acid polypeptide reads, in one-letter code: uncharacterized protein (54 aa).

The interval 34 to 54 (NNREKQKSGKLRELRRGFKTF) is disordered.

This is an uncharacterized protein from Acidianus two-tailed virus (ATV).